A 252-amino-acid chain; its full sequence is Phosphate import ATP-binding protein PstB (252 aa).

The ABC transporter domain maps to 5–247 (MRGQDVKVFY…PKEQRTQDYI (243 aa)). 37–44 (GPSGCGKS) is an ATP binding site.

This sequence belongs to the ABC transporter superfamily. Phosphate importer (TC 3.A.1.7) family. In terms of assembly, the complex is composed of two ATP-binding proteins (PstB), two transmembrane proteins (PstC and PstA) and a solute-binding protein (PstS).

The protein resides in the cell inner membrane. It catalyses the reaction phosphate(out) + ATP + H2O = ADP + 2 phosphate(in) + H(+). In terms of biological role, part of the ABC transporter complex PstSACB involved in phosphate import. Responsible for energy coupling to the transport system. This is Phosphate import ATP-binding protein PstB from Bartonella quintana (strain Toulouse) (Rochalimaea quintana).